An 83-amino-acid polypeptide reads, in one-letter code: Protein YciN (83 aa).

This chain is Protein YciN (yciN), found in Escherichia coli O157:H7.